We begin with the raw amino-acid sequence, 93 residues long: Protein 6 (93 aa).

Polar residues predominate over residues 1–16 (MSSQQETNDKSNTQGH). Residues 1-52 (MSSQQETNDKSNTQGHPETDPEGKTGTDTGNTEDSPPDTDNVPITDDAIMDD) are disordered.

It localises to the virion. This chain is Protein 6 (6), found in Rice yellow stunt virus (RYSV).